Reading from the N-terminus, the 77-residue chain is U14-theraphotoxin-Cg1a 1 (77 aa).

The N-terminal stretch at 1-21 (MKTSVLLVILGIAAITVQCTA) is a signal peptide. Positions 22 to 49 (SESVEQDSLRTFVDAVLGWNAEMASEAR) are excised as a propeptide. 3 disulfide bridges follow: Cys50/Cys64, Cys57/Cys69, and Cys63/Cys75. Lys77 is subject to Lysine amide.

It belongs to the neurotoxin 10 (Hwtx-1) family. 65 (Jztx-21) subfamily. As to expression, expressed by the venom gland.

Its subcellular location is the secreted. Its function is as follows. Probable ion channel inhibitor. The chain is U14-theraphotoxin-Cg1a 1 from Chilobrachys guangxiensis (Chinese earth tiger tarantula).